The primary structure comprises 834 residues: Glycerol-3-phosphate acyltransferase (834 aa).

The HXXXXD motif signature appears at 309–314 (CHRSHI).

The protein belongs to the GPAT/DAPAT family.

The protein localises to the cell inner membrane. The catalysed reaction is sn-glycerol 3-phosphate + an acyl-CoA = a 1-acyl-sn-glycero-3-phosphate + CoA. It participates in phospholipid metabolism; CDP-diacylglycerol biosynthesis; CDP-diacylglycerol from sn-glycerol 3-phosphate: step 1/3. The chain is Glycerol-3-phosphate acyltransferase from Pseudomonas fluorescens (strain ATCC BAA-477 / NRRL B-23932 / Pf-5).